The sequence spans 640 residues: MFSCAKAYEDQNYSALKRACLRKKVLFEDPLFPATDDSLYYKGTPGPTVRWKRPKDICDDPRLFVDGISSHDLHQGQVGNCWFVAACSSLASRESLWQKVIPDWKEQEWNPEKPDSYAGIFHFNFWRFGEWVDVIVDDRLPTVNNQLIYCHSNSKNEFWCALVEKAYAKLAGCYQALDGGNTADALVDFTGGVSEPIDLTEGDLATDEAKRNQLFERVLKVHSRGGLISASIKAVTAADMEARLACGLVKGHAYAVTDVRKVRLGHGLLAFFKSEKLDMIRLRNPWGEREWTGPWSDTSEEWQKVSKSEREKMGVTVQDDGEFWMTFEDMCRYFTDIIKCRLINTSYLSIHKTWEEARLHGAWTRHEDPQQNRSGGCINHKDTFFQNPQYVFEVKKPEDEVLISIQQRPKRSTRREGKGENLAIGFDIYKVEENRQYRMHSLQHKAASSIYINSRSVFLRTELPEGRYVIIPTTFEPGHTGEFLLRVFTDVPSNCRELRLDEPPRTCWSSLCGYPQQVAQVHVLGAAGLKDSPTGANSYVIIKCEGEKVRSAVQRGTSTPEYNVKGIFYRKKLAQPITVQVWNHRVLKDEFLGQVHLKTAPDDLQDLHTLHLQDRSSRQPSDLPGIVAVRVLCSASLTAV.

Positions 26 to 343 constitute a Calpain catalytic domain; that stretch reads LFEDPLFPAT…FTDIIKCRLI (318 aa). Catalysis depends on residues cysteine 81, histidine 252, and asparagine 284. The interval 344–496 is domain III; that stretch reads NTSYLSIHKT…VFTDVPSNCR (153 aa). Residues 499–617 form the C2 domain; sequence RLDEPPRTCW…HTLHLQDRSS (119 aa).

It belongs to the peptidase C2 family.

Its function is as follows. Calcium-regulated non-lysosomal thiol-protease. This Mus musculus (Mouse) protein is Calpain-5 (Capn5).